The primary structure comprises 485 residues: Phosphoglucosamine mutase (485 aa).

Serine 133 acts as the Phosphoserine intermediate in catalysis. Residues serine 133, aspartate 274, aspartate 276, and aspartate 278 each contribute to the Mg(2+) site. Position 133 is a phosphoserine (serine 133).

It belongs to the phosphohexose mutase family. The cofactor is Mg(2+). Post-translationally, activated by phosphorylation.

It carries out the reaction alpha-D-glucosamine 1-phosphate = D-glucosamine 6-phosphate. Functionally, catalyzes the conversion of glucosamine-6-phosphate to glucosamine-1-phosphate. The chain is Phosphoglucosamine mutase from Crocosphaera subtropica (strain ATCC 51142 / BH68) (Cyanothece sp. (strain ATCC 51142)).